The primary structure comprises 66 residues: Large ribosomal subunit protein bL32 (66 aa).

Over residues 1-19 (MAVPKRKMSRSNTRARRSQ) the composition is skewed to basic residues. The disordered stretch occupies residues 1–20 (MAVPKRKMSRSNTRARRSQW).

It belongs to the bacterial ribosomal protein bL32 family.

This chain is Large ribosomal subunit protein bL32, found in Beutenbergia cavernae (strain ATCC BAA-8 / DSM 12333 / CCUG 43141 / JCM 11478 / NBRC 16432 / NCIMB 13614 / HKI 0122).